Reading from the N-terminus, the 1249-residue chain is Fanconi anemia group J protein (1249 aa).

In terms of domain architecture, Helicase ATP-binding spans 11 to 442; sequence GGVKIYFPYK…KDHEPLRAVC (432 aa). Residues 102-127 are compositionally biased toward polar residues; sequence QGTSRHFNYPSTPPSERNGTSSTCQD. A disordered region spans residues 102 to 131; it reads QGTSRHFNYPSTPPSERNGTSSTCQDSPEK. The short motif at 158-175 is the Nuclear localization signal element; the sequence is KKRIRPLETTQQIRKRHC. 185–192 serves as a coordination point for ATP; that stretch reads AKVDSGKT. Residues Cys-283, Cys-298, Cys-310, and Cys-350 each coordinate [4Fe-4S] cluster. A DEAH box motif is present at residues 393–396; the sequence is DEAH. Residues Ser-505, Ser-927, Ser-930, Ser-956, Ser-990, Ser-1004, and Ser-1032 each carry the phosphoserine modification. The segment at 888-1063 is interaction with BRCA1; sequence HQKVLNVSIK…ESSNLTVNTS (176 aa). 2 disordered regions span residues 1018 to 1042 and 1108 to 1127; these read KATPELGSSENSASSPPRFKTEKME and VSEEDKQSTSNRDFETEAED. Polar residues predominate over residues 1023 to 1032; it reads LGSSENSASS. Residues 1110 to 1122 are compositionally biased toward basic and acidic residues; the sequence is EEDKQSTSNRDFE. Ser-1237 carries the phosphoserine modification. N6-acetyllysine is present on Lys-1249.

It belongs to the DEAD box helicase family. DEAH subfamily. As to quaternary structure, interacts with the replication protein A complex (RPA) via the RPA1 subunit; following DNA damage they colocalize in foci in the nucleus. Binds directly to the BRCT domains of BRCA1. Interacts with the CIA complex components CIAO1, CIAO2B and MMS19. [4Fe-4S] cluster serves as cofactor. In terms of processing, phosphorylated. Phosphorylation is necessary for interaction with BRCA1, and is cell-cycle regulated. Post-translationally, acetylation at Lys-1249 facilitates DNA end processing required for repair and checkpoint signaling. As to expression, ubiquitously expressed, with highest levels in testis.

It is found in the nucleus. The protein localises to the cytoplasm. The enzyme catalyses Couples ATP hydrolysis with the unwinding of duplex DNA at the replication fork by translocating in the 5'-3' direction. This creates two antiparallel DNA single strands (ssDNA). The leading ssDNA polymer is the template for DNA polymerase III holoenzyme which synthesizes a continuous strand.. It catalyses the reaction ATP + H2O = ADP + phosphate + H(+). With respect to regulation, helicase activity on forked substrates is stimulated by replication protein A complex heterotrimer (RPA1, RPA2, RPA3). Helicase activity on G-quadruplex DNA is stimulated 3-fold by RPA, and inhibited by MSH2/MSH6. Unwinding of G-quadruplex DNA is inhibited by ATP-gamma-S and telomestatin (TMS); TMA does not inhibit unwinding of forked-duplex DNA. Helicase activity on dsDNA and G-quadruplex DNA is inhibited by porphyrin derivatives meso-tetra (N-methyl-4-pyridyl) porphine tetra tosylate (T4) and N-methyl mesoporphyrin IX (NMM). Functionally, DNA-dependent ATPase and 5'-3' DNA helicase required for the maintenance of chromosomal stability. Acts late in the Fanconi anemia pathway, after FANCD2 ubiquitination. Involved in the repair of DNA double-strand breaks by homologous recombination in a manner that depends on its association with BRCA1. Involved in the repair of abasic sites at replication forks by promoting the degradation of DNA-protein cross-links: acts by catalyzing unfolding of HMCES DNA-protein cross-link via its helicase activity, exposing the underlying DNA and enabling cleavage of the DNA-protein adduct by the SPRTN metalloprotease. Can unwind RNA:DNA substrates. Unwinds G-quadruplex DNA; unwinding requires a 5'-single stranded tail. This Homo sapiens (Human) protein is Fanconi anemia group J protein.